The chain runs to 43 residues: Potassium channel toxin gamma-KTx 4.9 (43 aa).

4 disulfides stabilise this stretch: Cys-5-Cys-23, Cys-11-Cys-34, Cys-20-Cys-39, and Cys-24-Cys-41.

This sequence belongs to the ergtoxin family. Gamma-KTx 4 subfamily. As to expression, expressed by the venom gland.

The protein resides in the secreted. In terms of biological role, reversibly blocks Kv11/ERG potassium channels. The chain is Potassium channel toxin gamma-KTx 4.9 from Centruroides sculpturatus (Arizona bark scorpion).